The following is a 453-amino-acid chain: MQVNETLAEGLRHEFQVSIPAAEIAAKADERLDDLKDKVKINGFRPGKVPVSHLKKLYGRSVMVETIEDTIRDTNMQIVNDRGLKLAGNPKVTMPSEPKEIEDILAGNSDLSYSVAIEVVPPIELADFKSFTIEKPVVDVSDADVDEAVERIAEQNRTYTTRAEGAKAENGDRITISFKGTIDGELFEGGSSEDILVVLGSNALIPGFEEQLVGAGVGETRTVKASFPGNYADSELAGKDAEFETTVSLIEAPEELKIDDEFAKLLGLEELDQLRQVVREQLSAEFARAMRQHVKRALFDRLDETHKFDAPPTLVEEEFEQVWKTIMAEMEKEKKTFADENTTEEEARAEYRRIADRRVRLSLVLSEIGEKNGITVADDEINRALISRARQTPGREKEIWDYYQRNPQALAQIRAPLFENKVVDFILELATITEKSVTREDLFKEHEAHSAEM.

Residues Gly171–Leu256 form the PPIase FKBP-type domain.

Belongs to the FKBP-type PPIase family. Tig subfamily.

It is found in the cytoplasm. The enzyme catalyses [protein]-peptidylproline (omega=180) = [protein]-peptidylproline (omega=0). Involved in protein export. Acts as a chaperone by maintaining the newly synthesized protein in an open conformation. Functions as a peptidyl-prolyl cis-trans isomerase. The sequence is that of Trigger factor from Nitrobacter winogradskyi (strain ATCC 25391 / DSM 10237 / CIP 104748 / NCIMB 11846 / Nb-255).